Here is a 630-residue protein sequence, read N- to C-terminus: Chaperone protein HtpG (630 aa).

The interval 1 to 327 (MSVETYKFDA…SEDLSLNISR (327 aa)) is a; substrate-binding. Positions 328–551 (ETLQHSPLID…EGSMDIRTER (224 aa)) are b. Positions 483–499 (TKTAKSSDTNNDGKDDT) are enriched in basic and acidic residues. Residues 483–504 (TKTAKSSDTNNDGKDDTSSSDD) are disordered. The c stretch occupies residues 552–630 (FLIEQKQLSS…INFFIEKSVN (79 aa)).

The protein belongs to the heat shock protein 90 family. Homodimer.

The protein resides in the cytoplasm. Functionally, molecular chaperone. Has ATPase activity. This is Chaperone protein HtpG from Orientia tsutsugamushi (strain Boryong) (Rickettsia tsutsugamushi).